Consider the following 325-residue polypeptide: Acetyl-coenzyme A carboxylase carboxyl transferase subunit alpha (325 aa).

The CoA carboxyltransferase C-terminal domain maps to 44 to 298; the sequence is QLEARADQLR…KAAIQDNLQA (255 aa).

It belongs to the AccA family. Acetyl-CoA carboxylase is a heterohexamer composed of biotin carboxyl carrier protein (AccB), biotin carboxylase (AccC) and two subunits each of ACCase subunit alpha (AccA) and ACCase subunit beta (AccD).

Its subcellular location is the cytoplasm. It catalyses the reaction N(6)-carboxybiotinyl-L-lysyl-[protein] + acetyl-CoA = N(6)-biotinyl-L-lysyl-[protein] + malonyl-CoA. It functions in the pathway lipid metabolism; malonyl-CoA biosynthesis; malonyl-CoA from acetyl-CoA: step 1/1. Its function is as follows. Component of the acetyl coenzyme A carboxylase (ACC) complex. First, biotin carboxylase catalyzes the carboxylation of biotin on its carrier protein (BCCP) and then the CO(2) group is transferred by the carboxyltransferase to acetyl-CoA to form malonyl-CoA. The polypeptide is Acetyl-coenzyme A carboxylase carboxyl transferase subunit alpha (Picosynechococcus sp. (strain ATCC 27264 / PCC 7002 / PR-6) (Agmenellum quadruplicatum)).